The primary structure comprises 172 residues: Adenine phosphoribosyltransferase (172 aa).

Belongs to the purine/pyrimidine phosphoribosyltransferase family. Homodimer.

It is found in the cytoplasm. The catalysed reaction is AMP + diphosphate = 5-phospho-alpha-D-ribose 1-diphosphate + adenine. It participates in purine metabolism; AMP biosynthesis via salvage pathway; AMP from adenine: step 1/1. In terms of biological role, catalyzes a salvage reaction resulting in the formation of AMP, that is energically less costly than de novo synthesis. The chain is Adenine phosphoribosyltransferase from Clostridium novyi (strain NT).